We begin with the raw amino-acid sequence, 119 residues long: Holo-[acyl-carrier-protein] synthase (119 aa).

Positions 5 and 51 each coordinate Mg(2+).

This sequence belongs to the P-Pant transferase superfamily. AcpS family. Requires Mg(2+) as cofactor.

Its subcellular location is the cytoplasm. The catalysed reaction is apo-[ACP] + CoA = holo-[ACP] + adenosine 3',5'-bisphosphate + H(+). Its function is as follows. Transfers the 4'-phosphopantetheine moiety from coenzyme A to a Ser of acyl-carrier-protein. This Helicobacter pylori (strain J99 / ATCC 700824) (Campylobacter pylori J99) protein is Holo-[acyl-carrier-protein] synthase.